Here is a 394-residue protein sequence, read N- to C-terminus: Putative agmatinase 1 (394 aa).

A signal peptide spans 1 to 20 (MALQSLFLILLAGAAQLAQA). Mn(2+)-binding residues include histidine 186, aspartate 209, histidine 211, aspartate 213, aspartate 307, and aspartate 309.

Belongs to the arginase family. It depends on Mn(2+) as a cofactor.

It catalyses the reaction agmatine + H2O = urea + putrescine. This chain is Putative agmatinase 1, found in Schizosaccharomyces pombe (strain 972 / ATCC 24843) (Fission yeast).